A 102-amino-acid polypeptide reads, in one-letter code: Putative lipid-transfer protein DIR1 (102 aa).

The signal sequence occupies residues M1 to V25. Cystine bridges form between C30–C67, C40–C56, C57–C94, and C69–C102. Q34 is an a 1-acyl-sn-glycero-3-phosphocholine binding site. E36 contributes to the Zn(2+) binding site. Position 38 (N38) interacts with a 1-acyl-sn-glycero-3-phosphocholine. Residue H62 participates in Zn(2+) binding.

The protein belongs to the A9/FIL1 family. In terms of assembly, self-interacts and binds to AZI1. Does not interact with PDLP1. Zn(2+) is required as a cofactor.

It is found in the secreted. The protein resides in the extracellular space. Its subcellular location is the apoplast. The protein localises to the endoplasmic reticulum. It localises to the cell junction. It is found in the plasmodesma. Functionally, putative lipid transfer protein required for systemic acquired resistance (SAR) long distance signaling. May interact with a lipid-derived molecule to promote long distance signaling associated with SAR. Together with AZI1, required for glycerol-3-phosphate- (G3P) and azelaic acid- (AA) induced systemic acquired resistance (SAR). Component of plant systemic immunity involved in priming defenses in a AA-dependent manner, by modulating production and/or translocation of a mobile signal(s) during SAR. Is able to bind with high affinity monoacylated phospholipids, mainly lysophosphatidylcholines. The chain is Putative lipid-transfer protein DIR1 (DIR1) from Arabidopsis thaliana (Mouse-ear cress).